We begin with the raw amino-acid sequence, 479 residues long: Phosphatidylinositol 4-kinase type 2-alpha (479 aa).

Position 1 is an N-acetylmethionine (M1). Residues M1–R58 are disordered. S5, S9, S44, S47, and S51 each carry phosphoserine. The span at V31–G45 shows a compositional bias: low complexity. The PI3K/PI4K catalytic domain maps to S124 to T453. Residues I130 to G136 form a G-loop region. ATP is bound by residues Y131 to S137 and K152. Residues E157–Y159 form an important for substrate binding region. The segment at K165–C178 is important for interaction with membranes. S-palmitoyl cysteine attachment occurs at residues C174, C175, C177, and C178. ATP is bound at residue Q261–V264. The tract at residues K268–R276 is important for interaction with membranes. Residues R305 to N313 are catalytic loop. The tract at residues A344 to F364 is activation loop. Residue D346 coordinates ATP. The tract at residues W359–W368 is important for interaction with membranes. Residue S462 is modified to Phosphoserine.

The protein belongs to the PI3/PI4-kinase family. Type II PI4K subfamily. Associates with the BLOC-1 and the AP-3 complexes; the BLOC-1 complex is required for optimal binding of PI4K2A to the AP-3 complex. Interacts with BLOC1S5 and DTNBP1. Interacts with ITCH. Interacts with FOS; this interaction may enhance phosphatidylinositol phosphorylation activity. Interacts with ATG9A. Post-translationally, palmitoylated by ZDHHC3 and ZDHHC7 in the CCPCC motif. Palmitoylation is cholesterol-dependent, and required for TGN localization. Ubiquitinated by ITCH; this does not lead to proteasomal degradation. In terms of tissue distribution, detected in brain (at protein level).

It is found in the golgi apparatus. Its subcellular location is the trans-Golgi network membrane. The protein localises to the membrane raft. The protein resides in the endosome. It localises to the endosome membrane. It is found in the cytoplasmic vesicle. Its subcellular location is the cell projection. The protein localises to the dendrite. The protein resides in the presynaptic cell membrane. It localises to the synapse. It is found in the synaptosome. Its subcellular location is the mitochondrion. The protein localises to the membrane. The protein resides in the cell membrane. It localises to the perikaryon. It is found in the neuron projection. It carries out the reaction a 1,2-diacyl-sn-glycero-3-phospho-(1D-myo-inositol) + ATP = a 1,2-diacyl-sn-glycero-3-phospho-(1D-myo-inositol 4-phosphate) + ADP + H(+). Membrane-bound phosphatidylinositol-4 kinase (PI4-kinase) that catalyzes the phosphorylation of phosphatidylinositol (PI) to phosphatidylinositol 4-phosphate (PI4P), a lipid that plays important roles in endocytosis, Golgi function, protein sorting and membrane trafficking and is required for prolonged survival of neurons. Besides, phosphorylation of phosphatidylinositol (PI) to phosphatidylinositol 4-phosphate (PI4P) is the first committed step in the generation of phosphatidylinositol 4,5-bisphosphate (PIP2), a precursor of the second messenger inositol 1,4,5-trisphosphate (InsP3). The chain is Phosphatidylinositol 4-kinase type 2-alpha (Pi4k2a) from Mus musculus (Mouse).